The sequence spans 271 residues: Putative pyruvate, phosphate dikinase regulatory protein (271 aa).

ADP is bound at residue Gly-151 to Thr-158.

Belongs to the pyruvate, phosphate/water dikinase regulatory protein family. PDRP subfamily.

It catalyses the reaction N(tele)-phospho-L-histidyl/L-threonyl-[pyruvate, phosphate dikinase] + ADP = N(tele)-phospho-L-histidyl/O-phospho-L-threonyl-[pyruvate, phosphate dikinase] + AMP + H(+). The enzyme catalyses N(tele)-phospho-L-histidyl/O-phospho-L-threonyl-[pyruvate, phosphate dikinase] + phosphate + H(+) = N(tele)-phospho-L-histidyl/L-threonyl-[pyruvate, phosphate dikinase] + diphosphate. Its function is as follows. Bifunctional serine/threonine kinase and phosphorylase involved in the regulation of the pyruvate, phosphate dikinase (PPDK) by catalyzing its phosphorylation/dephosphorylation. This Streptococcus uberis (strain ATCC BAA-854 / 0140J) protein is Putative pyruvate, phosphate dikinase regulatory protein.